Reading from the N-terminus, the 172-residue chain is Lipoprotein signal peptidase (172 aa).

Helical transmembrane passes span 4–24 (LSSS…LDQV), 39–59 (VAIL…AFSF), 69–89 (WFFT…LAKL), and 93–113 (WTLE…NVID). Residues Asp-122 and Asp-140 contribute to the active site. Residues 136–156 (FNVADMGISIGAVLLIISEFW) traverse the membrane as a helical segment.

Belongs to the peptidase A8 family.

It localises to the cell inner membrane. The catalysed reaction is Release of signal peptides from bacterial membrane prolipoproteins. Hydrolyzes -Xaa-Yaa-Zaa-|-(S,diacylglyceryl)Cys-, in which Xaa is hydrophobic (preferably Leu), and Yaa (Ala or Ser) and Zaa (Gly or Ala) have small, neutral side chains.. Its pathway is protein modification; lipoprotein biosynthesis (signal peptide cleavage). This protein specifically catalyzes the removal of signal peptides from prolipoproteins. This chain is Lipoprotein signal peptidase, found in Hydrogenovibrio crunogenus (strain DSM 25203 / XCL-2) (Thiomicrospira crunogena).